Reading from the N-terminus, the 501-residue chain is Protein NBA1 (501 aa).

Disordered regions lie at residues 1–78 (MSEE…PGDN) and 102–133 (NRQQ…LPSL). A compositionally biased stretch (polar residues) spans 11 to 20 (SRATLNTQRL). Over residues 46–55 (ITEEKADQSD) the composition is skewed to basic and acidic residues. Position 138 is a phosphoserine (Ser-138). Residues 146–165 (LSDNQSTKSNTNADEIVIKP) are disordered. The span at 148–158 (DNQSTKSNTNA) shows a compositional bias: polar residues. The residue at position 208 (Ser-208) is a Phosphoserine. Disordered stretches follow at residues 267 to 286 (PIRS…SKDR) and 338 to 366 (AATS…RVTS). The necessary for the normal cellular distribution and bud neck targeting stretch occupies residues 275 to 501 (YNPTIPPRSK…DKATKALEGF (227 aa)). The residue at position 403 (Thr-403) is a Phosphothreonine.

Interacts with NAP1 (via the central domain consisting of amino acids 143 to 362). Copurifies with ribosomes. Phosphorylated by CDC28.

Its subcellular location is the bud neck. The protein localises to the cytoplasm. The chain is Protein NBA1 (NBA1) from Saccharomyces cerevisiae (strain ATCC 204508 / S288c) (Baker's yeast).